The chain runs to 1034 residues: MELNGSPQKPKRKHSGDPHSLPSAKHLRPDSAAPSSPRISGDQTSGDLAVYGYRNVDSADAAAMQMKLPAVQTDSAEWQETIETVVKSVVSIHFCQTASFDTDLSMSSQATGFVVDAKRGYILTNRHVVCAGPFWGYCIFDNHEECDVTPIYRDPVHDFGILKFDPKAIKYMPLTELKLQPESARVGVEIRVVGNDAGEKLSILSGVISRLDRNAPEYGEGYSDFNTNYIQAAAAASGGSSGSPVVNIDGHVIALQAGGRADGAATDYFLPLDRPLRALQCIQKGELVSRGTIQTQWIIKPFDECRRLGLSPEWEAEVRRVAPKETGMLVAEIVLPEGPGDGKLQEGDVLIKANGELLTQFVRLDDILDSSVGGDVHLLVQRGGEDLEVTCKVQDLHAITPSRYVTVAGATFHDLSYQQARLYAIACKGVYVCEAAGSFKLESTFSGWIIDSVDKRPTRNLDEFIEVLKTIPDRARIVLSYRHIRDLHTRGTSIVHIDRHWHPHMRLAQRNDQTGLWDFTDLADPIPAEPPVPRKADFIQLDGVSHPAAADIVRSFVRVSCTMPVKLDGFPQARKTGFGLVVDAEKGLVVISRAIVPFDLCDINITVADSIIVSAKVVFLHPLQNYTIIQYDPSLVQAPVKTARLSPEYIKQGAETLFVGFNQNFRIVVAKTAVTDITTVAIPPNAAAPRYRAINLDAITVDTGLSSQCTSGVLLGEDGVIQALWLNYLGERTQSSHKDVEYHLGLATPSLIPVISQIQSGVIPRLRILDMETYVIQMSQARVMGVSEEWIEKVAKANAARHELFMVRKVDCASPLSADVRPLEEGDIILTLNDKLITRVSEFDMMYDQETLDALIVRNGEEMKIKIKTVPTEDLETDRALIFCGAVLQKPHHAVRQQISKLHSEVYVSARSRGSPAYQYGLSPTNFITAVNGVKTPDLDSFIREVSNIPNNTYFRLRAVTFDNVPWVVTMKKNDHYFPMSEYIKEPSAPLGWRTVNYDRGKERRGTGDIANLNADAMDEGRDEGVSDVEPDIE.

The segment at 1 to 44 (MELNGSPQKPKRKHSGDPHSLPSAKHLRPDSAAPSSPRISGDQT) is disordered. Positions 33 to 44 (APSSPRISGDQT) are enriched in polar residues. The serine protease stretch occupies residues 89–273 (VVSIHFCQTA…AATDYFLPLD (185 aa)). Catalysis depends on charge relay system residues His127, Asp158, and Ser240. PDZ domains lie at 296 to 381 (QWII…LLVQ) and 882 to 963 (IFCG…VTFD). The interval 1004 to 1034 (RRGTGDIANLNADAMDEGRDEGVSDVEPDIE) is disordered.

The protein belongs to the peptidase S1C family.

Its subcellular location is the nucleus. Nuclear serine protease which mediates apoptosis. In Coccidioides immitis (strain RS) (Valley fever fungus), this protein is Pro-apoptotic serine protease NMA111 (NMA111).